Here is a 349-residue protein sequence, read N- to C-terminus: UDP-3-O-acylglucosamine N-acyltransferase (349 aa).

H246 acts as the Proton acceptor in catalysis.

It belongs to the transferase hexapeptide repeat family. LpxD subfamily. Homotrimer.

It catalyses the reaction a UDP-3-O-[(3R)-3-hydroxyacyl]-alpha-D-glucosamine + a (3R)-hydroxyacyl-[ACP] = a UDP-2-N,3-O-bis[(3R)-3-hydroxyacyl]-alpha-D-glucosamine + holo-[ACP] + H(+). It functions in the pathway bacterial outer membrane biogenesis; LPS lipid A biosynthesis. Its function is as follows. Catalyzes the N-acylation of UDP-3-O-acylglucosamine using 3-hydroxyacyl-ACP as the acyl donor. Is involved in the biosynthesis of lipid A, a phosphorylated glycolipid that anchors the lipopolysaccharide to the outer membrane of the cell. The polypeptide is UDP-3-O-acylglucosamine N-acyltransferase (Protochlamydia amoebophila (strain UWE25)).